We begin with the raw amino-acid sequence, 487 residues long: Cobyric acid synthase (487 aa).

The GATase cobBQ-type domain occupies 251–439; sequence KLKVVAPAYP…CHGVLDHPEA (189 aa). C332 functions as the Nucleophile in the catalytic mechanism. H431 is an active-site residue.

This sequence belongs to the CobB/CobQ family. CobQ subfamily.

The protein operates within cofactor biosynthesis; adenosylcobalamin biosynthesis. Its function is as follows. Catalyzes amidations at positions B, D, E, and G on adenosylcobyrinic A,C-diamide. NH(2) groups are provided by glutamine, and one molecule of ATP is hydrogenolyzed for each amidation. The chain is Cobyric acid synthase from Dechloromonas aromatica (strain RCB).